We begin with the raw amino-acid sequence, 576 residues long: 3-hydroxy-3-methylglutaryl coenzyme A reductase 1 (576 aa).

The disordered stretch occupies residues Met1–Arg35. 2 helical membrane-spanning segments follow: residues Ala42–Ala62 and Ala89–Val109. Glu255 (charge relay system) is an active-site residue. N-linked (GlcNAc...) asparagine glycosylation occurs at Asn319. Catalysis depends on charge relay system residues Lys387 and Asp463. Residues Leu532–Ile552 traverse the membrane as a helical segment. Catalysis depends on His561, which acts as the Proton donor. Asn565 is a glycosylation site (N-linked (GlcNAc...) asparagine).

Belongs to the HMG-CoA reductase family. As to expression, expressed in trichomes, leaves, flowers, roots and stems.

Its subcellular location is the endoplasmic reticulum membrane. It is found in the plastid. The protein resides in the chloroplast membrane. The protein localises to the peroxisome membrane. It catalyses the reaction (R)-mevalonate + 2 NADP(+) + CoA = (3S)-3-hydroxy-3-methylglutaryl-CoA + 2 NADPH + 2 H(+). The protein operates within metabolic intermediate biosynthesis; (R)-mevalonate biosynthesis; (R)-mevalonate from acetyl-CoA: step 3/3. Its function is as follows. Catalyzes the synthesis of mevalonate, the specific precursor of all isoprenoid compounds present in plants. Component of the triterpene saponins (e.g. ginsenosides or panaxosides) and phytosterols biosynthetic pathways. Promotes triterpenes accumulation in roots. The protein is 3-hydroxy-3-methylglutaryl coenzyme A reductase 1 of Cannabis sativa (Hemp).